A 189-amino-acid chain; its full sequence is Insecticyanin-A (189 aa).

2 cysteine pairs are disulfide-bonded: cysteine 9–cysteine 119 and cysteine 43–cysteine 175.

Belongs to the calycin superfamily. Lipocalin family. As to quaternary structure, homotetramer. Synthesized only in the caterpillars, apparently by the epidermis and secreted into the hemolymph. The protein is passed over from the larval hemolymph to that of pupae and adults and is sequestered in the eggs.

Its subcellular location is the secreted. In terms of biological role, this protein binds a chromophore: biliverdin IX, isomer gamma. Mixed with lipoprotein-bound carotenes, this blue protein provides hornworms with their green cryptic coloration which serves a camouflage. This chain is Insecticyanin-A (INSA), found in Manduca sexta (Tobacco hawkmoth).